The following is a 344-amino-acid chain: N-acetyl-gamma-glutamyl-phosphate reductase (344 aa).

The active site involves cysteine 149.

This sequence belongs to the NAGSA dehydrogenase family. Type 1 subfamily.

The protein resides in the cytoplasm. It catalyses the reaction N-acetyl-L-glutamate 5-semialdehyde + phosphate + NADP(+) = N-acetyl-L-glutamyl 5-phosphate + NADPH + H(+). Its pathway is amino-acid biosynthesis; L-arginine biosynthesis; N(2)-acetyl-L-ornithine from L-glutamate: step 3/4. In terms of biological role, catalyzes the NADPH-dependent reduction of N-acetyl-5-glutamyl phosphate to yield N-acetyl-L-glutamate 5-semialdehyde. The sequence is that of N-acetyl-gamma-glutamyl-phosphate reductase from Thermoanaerobacter pseudethanolicus (strain ATCC 33223 / 39E) (Clostridium thermohydrosulfuricum).